We begin with the raw amino-acid sequence, 186 residues long: MVVVGLGNPGPRYAFTRHNVGFLFLDFLKNKDWKTEKYFAWNKINLAGNEVALVKPLTYMNLSGLAMPHVLKFFSASLDDIIVVYDDVSLKLGKIRIRKKGSDGGHNGMKSIIQALGTQEIKRIRVGIGDKPEGMDLVDFVLGEFSDEEWIILNKVFEVMKEALEVILVEGIEKAMSIYNSLEVRV.

A tRNA-binding site is contributed by Y13. Residue H18 is the Proton acceptor of the active site. TRNA-binding residues include Y59, N61, and N107.

This sequence belongs to the PTH family. In terms of assembly, monomer.

The protein localises to the cytoplasm. It catalyses the reaction an N-acyl-L-alpha-aminoacyl-tRNA + H2O = an N-acyl-L-amino acid + a tRNA + H(+). Hydrolyzes ribosome-free peptidyl-tRNAs (with 1 or more amino acids incorporated), which drop off the ribosome during protein synthesis, or as a result of ribosome stalling. Functionally, catalyzes the release of premature peptidyl moieties from peptidyl-tRNA molecules trapped in stalled 50S ribosomal subunits, and thus maintains levels of free tRNAs and 50S ribosomes. This Thermotoga sp. (strain RQ2) protein is Peptidyl-tRNA hydrolase.